Reading from the N-terminus, the 730-residue chain is MFDIHREELDWGGRTLTLETGKMARQADGSVLATYGDTKVLATVVSAREPKPGQDFFPLTVNYQEKTYAAGRIPGGYFKREGRPSEKETLVSRLIDRPIRPLFPEGYKCDTQVVITVLAHDLENDPDVVAMVAASAALTLSGVPFMGPVGAARVGFIDNEYVLNPTVDEVKESALELVVAGTGDAVLMVESEAKELPEEIMLGAVMFGHRHFQPVIEAIIKLAEKAAKEPRNFQPADVSEVESKVREIAEADLRAAYKIKQKQDRYAAVGAAKSKVKKYYEELALDGTKVPTAQVVSDVLKALEAKIVRWNILDDGIRIDGRDVYTVRPIVSEVGILPRAHGSALFTRGETQALVVATLGTGEDEQFIDSLEGTYKEHFLLHYNFPPFSVGETGRMGSPGRREIGHGKLAWRAIHPMLPAKHEFPYTLRVVSEILESNGSSSMATVCGTSLALMDAGVPLRRPVAGIAMGLILEGEKFAVLSDILGDEDHLGDMDFKVAGTEQGVTSLQMDIKIAGITEEIMKVALTQAKDGRVHILGEMAKALTTARAELGEHAPRIEVMKIAVDKIREVIGSGGKVIREIVEKTGAKINIEDDGTIKIASASGDAIKAAINWIKSIASEPEVGQIYEGTVVKVVDFGAFVNFFGSKDGLVHVSQMANERVAKPSDVVKEGDKVKVKLMGFDERGKTRLSMKVVDQTTGEDLEAKAKAERDAARAAAPAATGDEAGAAE.

Residues Asp-489 and Asp-495 each contribute to the Mg(2+) site. Residues 556–615 (PRIEVMKIAVDKIREVIGSGGKVIREIVEKTGAKINIEDDGTIKIASASGDAIKAAINWI) enclose the KH domain. Positions 625 to 693 (GQIYEGTVVK…ERGKTRLSMK (69 aa)) constitute an S1 motif domain. The tract at residues 700-730 (GEDLEAKAKAERDAARAAAPAATGDEAGAAE) is disordered. The span at 703–714 (LEAKAKAERDAA) shows a compositional bias: basic and acidic residues. The span at 715–730 (RAAAPAATGDEAGAAE) shows a compositional bias: low complexity.

This sequence belongs to the polyribonucleotide nucleotidyltransferase family. The cofactor is Mg(2+).

It is found in the cytoplasm. It catalyses the reaction RNA(n+1) + phosphate = RNA(n) + a ribonucleoside 5'-diphosphate. Involved in mRNA degradation. Catalyzes the phosphorolysis of single-stranded polyribonucleotides processively in the 3'- to 5'-direction. This is Polyribonucleotide nucleotidyltransferase from Xanthobacter autotrophicus (strain ATCC BAA-1158 / Py2).